The primary structure comprises 380 residues: Acetylornithine deacetylase (380 aa).

Residue His-79 coordinates Zn(2+). Asp-81 is a catalytic residue. Asp-109 provides a ligand contact to Zn(2+). Glu-139 is an active-site residue. Positions 140, 164, and 351 each coordinate Zn(2+).

It belongs to the peptidase M20A family. ArgE subfamily. As to quaternary structure, homodimer. It depends on Zn(2+) as a cofactor. Co(2+) serves as cofactor. Requires glutathione as cofactor.

It localises to the cytoplasm. It catalyses the reaction N(2)-acetyl-L-ornithine + H2O = L-ornithine + acetate. Its pathway is amino-acid biosynthesis; L-arginine biosynthesis; L-ornithine from N(2)-acetyl-L-ornithine (linear): step 1/1. Its function is as follows. Catalyzes the hydrolysis of the amide bond of N(2)-acetylated L-amino acids. Cleaves the acetyl group from N-acetyl-L-ornithine to form L-ornithine, an intermediate in L-arginine biosynthesis pathway, and a branchpoint in the synthesis of polyamines. This Myxococcus xanthus protein is Acetylornithine deacetylase.